We begin with the raw amino-acid sequence, 147 residues long: Large ribosomal subunit protein uL15 (147 aa).

The span at 1 to 13 (MRLHDLKPAEGAR) shows a compositional bias: basic and acidic residues. The disordered stretch occupies residues 1–58 (MRLHDLKPAEGARRERKRVGRGIGSGHGKTSGRGQKGQKARSGGGVRPGFEGGQMPLT). Gly residues-rich tracts occupy residues 21-35 (RGIGSGHGKTSGRGQ) and 42-52 (SGGGVRPGFEG).

This sequence belongs to the universal ribosomal protein uL15 family. Part of the 50S ribosomal subunit.

Binds to the 23S rRNA. The polypeptide is Large ribosomal subunit protein uL15 (Thermoanaerobacter sp. (strain X514)).